The sequence spans 197 residues: dTTP/UTP pyrophosphatase (197 aa).

Asp70 functions as the Proton acceptor in the catalytic mechanism.

It belongs to the Maf family. YhdE subfamily. It depends on a divalent metal cation as a cofactor.

It localises to the cytoplasm. The enzyme catalyses dTTP + H2O = dTMP + diphosphate + H(+). The catalysed reaction is UTP + H2O = UMP + diphosphate + H(+). Its function is as follows. Nucleoside triphosphate pyrophosphatase that hydrolyzes dTTP and UTP. May have a dual role in cell division arrest and in preventing the incorporation of modified nucleotides into cellular nucleic acids. The polypeptide is dTTP/UTP pyrophosphatase (Yersinia pestis bv. Antiqua (strain Antiqua)).